The following is a 225-amino-acid chain: tRNA (guanine-N(1)-)-methyltransferase (225 aa).

S-adenosyl-L-methionine is bound by residues glycine 110 and 130–135 (VGDYVL).

It belongs to the RNA methyltransferase TrmD family. In terms of assembly, homodimer.

It localises to the cytoplasm. The catalysed reaction is guanosine(37) in tRNA + S-adenosyl-L-methionine = N(1)-methylguanosine(37) in tRNA + S-adenosyl-L-homocysteine + H(+). Functionally, specifically methylates guanosine-37 in various tRNAs. The polypeptide is tRNA (guanine-N(1)-)-methyltransferase (Neorickettsia sennetsu (strain ATCC VR-367 / Miyayama) (Ehrlichia sennetsu)).